A 354-amino-acid chain; its full sequence is 3'-5' exonuclease (354 aa).

Residues 1-120 form a disordered region; sequence MEKYLIKMPI…PSPEKEKPEK (120 aa). Positions 36 to 50 are enriched in basic and acidic residues; that stretch reads TKKDTPKELKDKENA. Residues 59–70 are compositionally biased toward basic residues; the sequence is TKGRPGRPAVKR. Positions 71–91 are enriched in basic and acidic residues; the sequence is KNLDNPDAKAEKKATEEENPP. A phosphoserine mark is found at S104, S110, and S112. One can recognise a 3'-5' exonuclease domain in the interval 146–314; that stretch reads VLQWVEKQKD…GQVIYRELER (169 aa). Mg(2+) is bound by residues D163, E165, and D301.

Belongs to the WRNexo family.

Its subcellular location is the nucleus. Has exonuclease activity on both single-stranded and duplex templates bearing overhangs, but not blunt ended duplex DNA, and cleaves in a 3'-5' direction. Essential for the formation of DNA replication focal centers. Has an important role in maintaining genome stability. This is 3'-5' exonuclease from Drosophila yakuba (Fruit fly).